A 346-amino-acid chain; its full sequence is Leucine zipper protein 2 (346 aa).

The signal sequence occupies residues 1-17; sequence MKFIGAVYLLFLLPALS. Residues asparagine 19 and asparagine 131 are each glycosylated (N-linked (GlcNAc...) asparagine). A coiled-coil region spans residues 41-209; it reads RHLSKTSKEL…QLKALKDTVH (169 aa). The interval 162 to 190 is leucine-zipper; that stretch reads LRYGKKDLIFKGQQLMDLENKLKVAKDEL. Asparagine 241 and asparagine 296 each carry an N-linked (GlcNAc...) asparagine glycan. Positions 271-346 are disordered; sequence SAVMRRESTG…LKKTQSDKHN (76 aa). Residues 293–324 show a composition bias toward polar residues; the sequence is CSHNQTESSSVMKKTFGHSQSKTPEQNGQGQA. The span at 326-346 shows a compositional bias: basic and acidic residues; it reads TAEESVKTDGELKKTQSDKHN.

It is found in the secreted. The chain is Leucine zipper protein 2 (luzp2) from Danio rerio (Zebrafish).